The sequence spans 906 residues: Glutamate receptor 1 (906 aa).

The N-terminal stretch at 1–18 (MQHIFAFFCTGFLGAVVG) is a signal peptide. The Extracellular segment spans residues 19 to 536 (ANFPNNIQIG…GVFSFLDPLA (518 aa)). Residues Asn63, Asn249, Asn257, Asn363, Asn401, and Asn406 are each glycosylated (N-linked (GlcNAc...) asparagine). Cysteines 75 and 323 form a disulfide. The L-glutamate site is built by Pro492, Thr494, and Arg499. A helical transmembrane segment spans residues 537-557 (YEIWMCIVFAYIGVSVVLFLV). Residues 558–584 (SRFSPYEWHSEEFEEGRDQTTSDQSNE) lie on the Cytoplasmic side of the membrane. Positions 585 to 600 (FGIFNSLWFSLGAFMQ) form an intramembrane region, helical; Pore-forming. An intramembrane segment occupies 601-603 (QGC). Residue Cys603 is the site of S-palmitoyl cysteine attachment. Residues 604–609 (DISPRS) lie on the Cytoplasmic side of the membrane. Residues 610–630 (LSGRIVGGVWWFFTLIIISSY) traverse the membrane as a helical segment. The Extracellular portion of the chain corresponds to 631–805 (TANLAAFLTV…DKTSALSLSN (175 aa)). Ser645 is modified (phosphoserine). 2 residues coordinate L-glutamate: Ser668 and Thr669. Ser710 bears the Phosphoserine mark. Residue Glu719 participates in L-glutamate binding. Cys732 and Cys787 are joined by a disulfide. Residues 806-826 (VAGVFYILIGGLGLAMLVALI) form a helical membrane-spanning segment. Over 827–906 (EFCYKSRSES…SGMPLGATGL (80 aa)) the chain is Cytoplasmic. Cys829 is lipidated: S-palmitoyl cysteine. Residues Ser849 and Ser863 each carry the phosphoserine modification. The segment at 861–880 (RNSGAGASSGGSGENGRVVS) is disordered. The short motif at 903–906 (ATGL) is the PDZ-binding element.

It belongs to the glutamate-gated ion channel (TC 1.A.10.1) family. GRIA1 subfamily. As to quaternary structure, homotetramer or heterotetramer of pore-forming glutamate receptor subunits; heteromeric assembly can be the result of both receptor subtype and flip or flop form and according the composition, one partner can be dominant with respect to the fast desensitizing current component, whereas the other can determine the steady-state component. Tetramers may be formed by the dimerization of dimers. Found in a complex with GRIA2, GRIA3, GRIA4, CNIH2, CNIH3, CACNG2, CACNG3, CACNG4, CACNG5, CACNG7 and CACNG8. Interacts with HIP1 and RASGRF2. Interacts with SYNDIG1 and GRIA2. Interacts with DLG1 (via C-terminus). Interacts with LRFN1. Interacts with PRKG2. Interacts with CNIH2 and CACNG2. Interacts with CACNG5; this interaction modulates the gating. Interacts (via C-terminus) with PDLIM4 (via LIM domain); this interaction as well as the interaction of PDLIM4 with alpha-actinin is required for their colocalization in early endosomes. Interacts with SNX27 (via PDZ domain); the interaction is required for recycling to the plasma membrane when endocytosed and prevent degradation in lysosomes. Interacts (via PDZ-binding motif) with SHANK3 (via PDZ domain). Interacts with CACNG3; associates GRIA1 with the adapter protein complex 4 (AP-4) to target GRIA1 to the somatodendritic compartment of neurons. Interacts with CACNG2; this interaction mediates traffick to the plasma membrane and modulation of desensitization. Interacts with CNIH2 and CNIH3; this interaction promotes expression at the plasma membrane and extensively modulates their gating properties by slowing deactivation and desensitization kinetics. Found in a complex with GRIA2, GRIA3, GRIA4, DLG4, CACNG8 and CNIH2. Palmitoylated. Depalmitoylated by CPT1C and upon L-glutamate stimulation. ZDHHC3/GODZ specifically palmitoylates Cys-603, which leads to Golgi retention and decreased cell surface expression. In contrast, Cys-829 palmitoylation does not affect cell surface expression but regulates stimulation-dependent endocytosis. Post-translationally, phosphorylated at Ser-645. Phosphorylated at Ser-710 by PKC. Phosphorylated at Ser-849 by PKC, PKA and CAMK2. Phosphorylated at Ser-863 by PKC, PKA and PRKG2. Phosphorylation of Ser-863 is reduced by induction of long-term depression and increased by induction of long-term potentiation. In terms of tissue distribution, widely expressed in brain.

Its subcellular location is the cell membrane. It localises to the endoplasmic reticulum membrane. The protein resides in the postsynaptic cell membrane. It is found in the postsynaptic density membrane. The protein localises to the cell projection. Its subcellular location is the dendrite. It localises to the dendritic spine. The protein resides in the early endosome membrane. It is found in the recycling endosome membrane. The protein localises to the presynapse. Its subcellular location is the synapse. It catalyses the reaction Ca(2+)(in) = Ca(2+)(out). The catalysed reaction is Na(+)(in) = Na(+)(out). The enzyme catalyses Mg(2+)(in) = Mg(2+)(out). It carries out the reaction Li(+)(in) = Li(+)(out). It catalyses the reaction K(+)(in) = K(+)(out). The catalysed reaction is Sr(2+)(in) = Sr(2+)(out). Ionotropic glutamate receptor that functions as a ligand-gated cation channel, gated by L-glutamate and glutamatergic agonists such as alpha-amino-3-hydroxy-5-methyl-4-isoxazolepropionic acid (AMPA), quisqualic acid, and kainic acid. L-glutamate acts as an excitatory neurotransmitter at many synapses in the central nervous system. Binding of the excitatory neurotransmitter L-glutamate induces a conformation change, leading to the opening of the cation channel, and thereby converts the chemical signal to an electrical impulse upon entry of monovalent and divalent cations such as sodium and calcium. The receptor then desensitizes rapidly and enters in a transient inactive state, characterized by the presence of bound agonist. In the presence of CACNG2 or CACNG4 or CACNG7 or CACNG8, shows resensitization which is characterized by a delayed accumulation of current flux upon continued application of L-glutamate. Resensitization is blocked by CNIH2 through interaction with CACNG8 in the CACNG8-containing AMPA receptors complex. Calcium (Ca(2+)) permeability depends on subunits composition and, heteromeric channels containing edited GRIA2 subunit are calcium-impermeable. Also permeable to other divalents cations such as strontium(2+) and magnesium(2+) and monovalent cations such as potassium(1+) and lithium(1+). This Homo sapiens (Human) protein is Glutamate receptor 1.